Here is a 437-residue protein sequence, read N- to C-terminus: MTTFSPREIVSELDRFIVGQHDAKRAVAIALRNRWRRQQLTGPLREEVAPKNILMIGPTGCGKTEIARRLARLANAPFLKVEATKFTEVGYVGRDVEQIVRDLVEVAIGLTRQAKREGVKAKAEAAAENRILDALVGPTASQATRDSFRRKLRNSELDDKEVELELTSSAPAGMPMFEIPGVPGASMGAINIGDMLGKALGGQRGKPRRILVRDAYAPLMAEESDKLVDDEALVREAIREVENNGIVFLDEIDKICAREGRSSGDVSREGVQRDLLPLIEGTTVATKHGPVKTDHVLFIASGAFHVSKPADLLPELQGRLPIRVELQPLTVDDFKQILTATEASLLKQTVALMETEGVTLTFTDDAVDALARVAVEVNSSVENIGARRLQTVLERVIDEISFTATDRSGETVPIDAAYVRERVQDLASNADLSRFIL.

ATP-binding positions include V18, 60-65, D250, E315, and R387; that span reads GCGKTE.

The protein belongs to the ClpX chaperone family. HslU subfamily. As to quaternary structure, a double ring-shaped homohexamer of HslV is capped on each side by a ring-shaped HslU homohexamer. The assembly of the HslU/HslV complex is dependent on binding of ATP.

Its subcellular location is the cytoplasm. In terms of biological role, ATPase subunit of a proteasome-like degradation complex; this subunit has chaperone activity. The binding of ATP and its subsequent hydrolysis by HslU are essential for unfolding of protein substrates subsequently hydrolyzed by HslV. HslU recognizes the N-terminal part of its protein substrates and unfolds these before they are guided to HslV for hydrolysis. This chain is ATP-dependent protease ATPase subunit HslU, found in Methylobacterium radiotolerans (strain ATCC 27329 / DSM 1819 / JCM 2831 / NBRC 15690 / NCIMB 10815 / 0-1).